We begin with the raw amino-acid sequence, 114 residues long: Type 4 adapter protein IcmS (114 aa).

In terms of assembly, the T4BSS is a complex nanomachine composed of several subcomplexes. This subunit is part of the Type IV Coupling Complex (T4CC), a subcomplex composed of the DotLMNYZ core and the IcmSW-LvgA adapter subunits, linked by the C-terminal tail of DotL. Interacts with IcmW. IcmS and IcmW form a stable complex. Interacts directly with the type 4 coupling protein DotL. Interacts with LvgA. Interacts with effector proteins.

The protein resides in the cytoplasm. Its activity is regulated as follows. Interaction with DotL is critical for the export of IcmSW-dependent substrates. Component of the Dot/Icm type IVB secretion system (T4BSS), which is used to inject bacterial effector proteins into eukaryotic host cells. Part of a subcomplex which recruits effector proteins and delivers them to the core transmembrane subcomplex. The IcmS/IcmW protein complex plays an important role in protein translocation by interacting with multiple Dot/Icm effector proteins to facilitate their translocation into host cells. Interaction promotes conformational changes in the effector protein, which may facilitate display of a C-terminal translocation signal. May maintain the substrates in a translocation competent form. Required for intracellular growth in host cells, replicative phagosome formation and phagosome trafficking. IcmS is required for IcmW stability. The sequence is that of Type 4 adapter protein IcmS from Legionella pneumophila subsp. pneumophila (strain Philadelphia 1 / ATCC 33152 / DSM 7513).